The following is an 855-amino-acid chain: Photoactivated adenylate cyclase subunit beta-like protein 1224-5/9F (855 aa).

The BLUF 1 domain maps to leucine 56 to lysine 149. Positions arginine 420–arginine 444 are disordered. A BLUF 2 domain is found at valine 471–threonine 563. The segment covering arginine 813 to leucine 827 has biased composition (basic and acidic residues). The disordered stretch occupies residues arginine 813–arginine 855. Residues arginine 842 to arginine 855 are compositionally biased toward polar residues.

Heterotetramer of two alpha and two beta subunits.

It is found in the cell projection. The protein resides in the cilium. Its subcellular location is the flagellum. This Euglena gracilis protein is Photoactivated adenylate cyclase subunit beta-like protein 1224-5/9F.